The primary structure comprises 428 residues: MRAILILLDGLGDRASEILNNKTPLQFAKTPNLDRLAENGMCGLMTTYKEGIPLGTEVAHFLLWGYSLEEFPGRGVIEALGEDIEIEKNAIYLRASLGFVKKDEKGFLVIDRRTKDISREEIEKLVDSLPTCVDGYKFELFYSFDVHFILKIKERNGWISDKISDSDPFYKNRYVMKVKAIRELCKSEVEYSKAKDTARALNKYLLNVYKILQNHKINRKRRKLEKMPANFLLTKWASRYKRVESFKEKWGMNAVILAESSLFKGLAKFLGMDFIKIESFEEGIDLIPELDYDFIHLHTKETDEAAHTKNPLNKVKVIEKIDKLIGNLKLREDDLLIITADHSTPSVGNLIHSGESVPILFYGKNVRVDNVKEFNEISCSNGHLRIRGEELMHLILNYTDRALLYGLRSGDRLRYYIPKDDEIDLLEG.

This sequence belongs to the BPG-independent phosphoglycerate mutase family. A-PGAM subfamily.

It carries out the reaction (2R)-2-phosphoglycerate = (2R)-3-phosphoglycerate. It participates in carbohydrate degradation; glycolysis; pyruvate from D-glyceraldehyde 3-phosphate: step 3/5. Its function is as follows. Catalyzes the interconversion of 2-phosphoglycerate and 3-phosphoglycerate. This Methanocaldococcus jannaschii (strain ATCC 43067 / DSM 2661 / JAL-1 / JCM 10045 / NBRC 100440) (Methanococcus jannaschii) protein is 2,3-bisphosphoglycerate-independent phosphoglycerate mutase 2 (apgM2).